The chain runs to 88 residues: N(2)-fixation sustaining protein CowN (88 aa).

It belongs to the CowN family.

Is required to sustain N(2)-dependent growth in the presence of low levels of carbon monoxide (CO). Probably acts by protecting the N(2) fixation ability of the nitrogenase complex, which is inactivated in the presence of CO. This Rhodomicrobium vannielii (strain ATCC 17100 / DSM 162 / LMG 4299 / NCIMB 10020 / ATH 3.1.1) protein is N(2)-fixation sustaining protein CowN.